The primary structure comprises 629 residues: Microtubule-associated protein 70-3 (629 aa).

The tract at residues 1 to 54 (MEEGGYAFEVNNGRPTASEFGTTARISSPSLTMSSSFREGGGGGGSKGLTRRRS) is disordered. Residues 13-33 (GRPTASEFGTTARISSPSLTM) are compositionally biased toward polar residues. Positions 75-375 (VKVELNRLEN…ADRAAKSEAQ (301 aa)) form a coiled coil. The segment at 257–493 (ILDKLHRQKV…FPLNQSSEGT (237 aa)) is required for targeting to microtubules. 3 disordered regions span residues 391–421 (LRGP…LGGA), 458–519 (GTSR…DSVP), and 578–629 (AMEK…RSTQ). Polar residues predominate over residues 393–416 (GPSSSGNRSTPEGRSMSNGPSRRQ). Residues 544–592 (LRDKDEAIEMLAKKVETLTKAMEVEAKKMRREVAAMEKEVSAMRVDNKG) are a coiled coil. Over residues 578 to 596 (AMEKEVSAMRVDNKGSDSR) the composition is skewed to basic and acidic residues. Polar residues predominate over residues 603 to 613 (NSKGASTTAQL).

Belongs to the MAP70 family.

It is found in the cytoplasm. The protein resides in the cytoskeleton. Plant-specific protein that interact with microtubules. This is Microtubule-associated protein 70-3 (MAP70.3) from Arabidopsis thaliana (Mouse-ear cress).